A 614-amino-acid chain; its full sequence is Pyruvate decarboxylase 2 (614 aa).

Substrate-binding residues include aspartate 50 and histidine 137. The thiamine pyrophosphate binding stretch occupies residues aspartate 415–isoleucine 523. Residues aspartate 491, asparagine 518, and glycine 520 each contribute to the Mg(2+) site. Residue glutamate 524 coordinates substrate.

The protein belongs to the TPP enzyme family. As to quaternary structure, homotetramer. The cofactor is a metal cation. Requires thiamine diphosphate as cofactor. As to expression, pollen.

It catalyses the reaction a 2-oxocarboxylate + H(+) = an aldehyde + CO2. This Nicotiana tabacum (Common tobacco) protein is Pyruvate decarboxylase 2 (PDC2).